The following is a 229-amino-acid chain: Large ribosomal subunit protein uL3 (229 aa).

Glutamine 151 is subject to N5-methylglutamine.

The protein belongs to the universal ribosomal protein uL3 family. As to quaternary structure, part of the 50S ribosomal subunit. Forms a cluster with proteins L14 and L19. Post-translationally, methylated by PrmB.

In terms of biological role, one of the primary rRNA binding proteins, it binds directly near the 3'-end of the 23S rRNA, where it nucleates assembly of the 50S subunit. The chain is Large ribosomal subunit protein uL3 from Paramagnetospirillum magneticum (strain ATCC 700264 / AMB-1) (Magnetospirillum magneticum).